We begin with the raw amino-acid sequence, 638 residues long: Ubiquilin-2 (638 aa).

Residues 1–26 show a composition bias toward low complexity; that stretch reads MAENGESSGPPRPSRGPAAAPGAASP. Disordered regions lie at residues 1-31 and 107-158; these read MAEN…AEPK and RPQG…SSFG. N-acetylalanine is present on Ala2. Phosphoserine is present on Ser25. Residues 33–107 enclose the Ubiquitin-like domain; it reads IKVTVKTPKE…VHLVIKSQNR (75 aa). The segment covering 112–158 has biased composition (low complexity); sequence ATTQPSTTAGTSTTTTTTTTAAAPAATTSSAPRSSSTPTTTNSSSFG. STI1 domains are found at residues 189–217 and 219–258; these read SPEM…QLIM and NPQM…MQEM. The disordered stretch occupies residues 298–364; that stretch reads FGGNPFATVG…SGSSSSSTTA (67 aa). A compositionally biased stretch (low complexity) spans 305 to 316; that stretch reads TVGSSSTSGEGT. The segment covering 327 to 336 has biased composition (pro residues); it reads LPNPWAPPPT. Positions 337–364 are enriched in low complexity; that stretch reads TQTAATTTTTTTTSSGSGSGSSSSSTTA. STI1 domains follow at residues 393 to 440 and 444 to 476; these read NPQL…QEQM and LPNF…QQGL. A run of 11 repeats spans residues 505–507, 508–510, 511–513, 514–516, 517–519, 520–522, 523–525, 526–528, 529–531, 532–533, and 535–537. Residues 505–537 form an 11 X 3 AA tandem repeats P-X-X region; that stretch reads PVGPVTPIGPIGPIVPFTPIGPIGPIGPTGPAS. The segment at 528–570 is disordered; that stretch reads GPIGPTGPASSPGSTGTGIPPATTVSSSAPTETISPTSESGPN. Positions 533–551 are enriched in low complexity; the sequence is TGPASSPGSTGTGIPPATT. The segment covering 552–570 has biased composition (polar residues); sequence VSSSAPTETISPTSESGPN. Residues 589–635 enclose the UBA domain; sequence PPNPEVRFQQQLEQLNAMGFLNREANLQALIATGGDINAAIERLLGS.

As to quaternary structure, homodimer. Forms heterodimer with UBQLN1. Binds UBE3A and BTRC. Interacts with the 19S proteasome subunit. Interacts with C9orf72. Binds CD47. Interacts with HNRNPA1 and HNRNPU. Found in a complex with UBQLN1 and MAP1LC3A/B/C. Interacts with EPS15, EPN1 and EPN2. Interacts with HERPUD1. Interacts with RAD23A. Interacts with TARDBP. Interacts (via C-terminus) with FAF2 (via N-terminus). Interacts with UBQLN4. Degraded during macroautophagy. In terms of tissue distribution, highly expressed in smooth muscle. Expression in other tissues is very low.

It is found in the cytoplasm. The protein resides in the nucleus. The protein localises to the membrane. Its subcellular location is the cytoplasmic vesicle. It localises to the autophagosome. In terms of biological role, plays an important role in the regulation of different protein degradation mechanisms and pathways including ubiquitin-proteasome system (UPS), autophagy and the endoplasmic reticulum-associated protein degradation (ERAD) pathway. Mediates the proteasomal targeting of misfolded or accumulated proteins for degradation by binding (via UBA domain) to their polyubiquitin chains and by interacting (via ubiquitin-like domain) with the subunits of the proteasome. Plays a role in the ERAD pathway via its interaction with ER-localized proteins FAF2/UBXD8 and HERPUD1 and may form a link between the polyubiquitinated ERAD substrates and the proteasome. Involved in the regulation of macroautophagy and autophagosome formation; required for maturation of autophagy-related protein LC3 from the cytosolic form LC3-I to the membrane-bound form LC3-II and may assist in the maturation of autophagosomes to autolysosomes by mediating autophagosome-lysosome fusion. Negatively regulates the endocytosis of GPCR receptors: AVPR2 and ADRB2, by specifically reducing the rate at which receptor-arrestin complexes concentrate in clathrin-coated pits (CCPs). Links CD47 to vimentin-containing intermediate filaments of the cytoskeleton. The chain is Ubiquilin-2 (Ubqln2) from Mus musculus (Mouse).